The following is a 733-amino-acid chain: Photosystem I P700 chlorophyll a apoprotein A2 (733 aa).

Transmembrane regions (helical) follow at residues 46–69 (IFASHFGHLAVIFLWTAGNLFHVA), 134–157 (LYLGSVGLLILASVLLFAGWLHLQ), 174–198 (LNHHLSGLLGVSSLAWTGHIVHVAI), 272–290 (IAHHQLAIAVVFIVAGHMY), 329–352 (LHMQLGLALACLGVATSLTAQHMY), 368–394 (AALYTHHQYIAGFLMVGAFAHGAIFFV), 416–438 (AIISHLSWASLFLGFHTLGLYIH), and 516–534 (FLVHHAIALGLHTTTLILV). 2 residues coordinate [4Fe-4S] cluster: C558 and C567. Helical transmembrane passes span 574-595 (AFYLAMFWMLNTIGWVTFYWHW) and 642-664 (LSVWAWMFLFGHLIWATGFMFLI). Residues H653, M661, and Y669 each coordinate chlorophyll a. Residue W670 coordinates phylloquinone. Residues 706–726 (LVGLVHFTVGYVLTYAAFVIA) form a helical membrane-spanning segment.

It belongs to the PsaA/PsaB family. The PsaA/B heterodimer binds the P700 chlorophyll special pair and subsequent electron acceptors. PSI consists of a core antenna complex that captures photons, and an electron transfer chain that converts photonic excitation into a charge separation. The eukaryotic PSI reaction center is composed of at least 11 subunits. The cofactor is P700 is a chlorophyll a/chlorophyll a' dimer, A0 is one or more chlorophyll a, A1 is one or both phylloquinones and FX is a shared 4Fe-4S iron-sulfur center..

The protein localises to the plastid. The protein resides in the chloroplast thylakoid membrane. It carries out the reaction reduced [plastocyanin] + hnu + oxidized [2Fe-2S]-[ferredoxin] = oxidized [plastocyanin] + reduced [2Fe-2S]-[ferredoxin]. PsaA and PsaB bind P700, the primary electron donor of photosystem I (PSI), as well as the electron acceptors A0, A1 and FX. PSI is a plastocyanin/cytochrome c6-ferredoxin oxidoreductase, converting photonic excitation into a charge separation, which transfers an electron from the donor P700 chlorophyll pair to the spectroscopically characterized acceptors A0, A1, FX, FA and FB in turn. Oxidized P700 is reduced on the lumenal side of the thylakoid membrane by plastocyanin or cytochrome c6. This is Photosystem I P700 chlorophyll a apoprotein A2 from Phaeodactylum tricornutum (strain CCAP 1055/1).